Here is a 687-residue protein sequence, read N- to C-terminus: Glycine--tRNA ligase beta subunit (687 aa).

The protein belongs to the class-II aminoacyl-tRNA synthetase family. In terms of assembly, tetramer of two alpha and two beta subunits.

Its subcellular location is the cytoplasm. It catalyses the reaction tRNA(Gly) + glycine + ATP = glycyl-tRNA(Gly) + AMP + diphosphate. In Ruegeria sp. (strain TM1040) (Silicibacter sp.), this protein is Glycine--tRNA ligase beta subunit.